The chain runs to 454 residues: MREIVNLQAGQCGNQIGAKFWEIISEEHGIDSNGIYVGDSDLQLERVSVYYNEASAVTRSSGGKYVPRAILLDLEPGTMESVRSGPYGQLFRPDNFVYGQSGAGNNWAKGHYTEGAELVDNVLDVVRKECENCDCLQGFQLTHSLGGGTGSGMGTLLISKIREEYPDRIMNTYSVVPSPKVSDTVVEPYNATLSIHQLVENTDETYCIDNEALYDICFRTLKVSNPSYGDLNHLVSLTMSGVTTCLRFPGQLNADLRKLAVNMVPFPRLHFFMPGFAPLTSRGSQQYRALTVPELTQQMFDAKNMMAACDPRHGRYLTVAAVFRGRMSMKEVDEQMLAVQNKNSSYFVEWIPNNVKTAVCDIPPKGLKMSSTFIGNTTAIQELFKRISEQFSAMFRRKAFLHWYTGEGMDEMEFTEAESNMNDLVSEYQQYQEATADDEFDPEVNQEEVEGDCI.

Residues Q11, E75, S144, G148, T149, G150, N210, and N232 each contribute to the GTP site. Residue E75 coordinates Mg(2+). Positions 435 to 454 (TADDEFDPEVNQEEVEGDCI) are disordered.

It belongs to the tubulin family. Dimer of alpha and beta chains. A typical microtubule is a hollow water-filled tube with an outer diameter of 25 nm and an inner diameter of 15 nM. Alpha-beta heterodimers associate head-to-tail to form protofilaments running lengthwise along the microtubule wall with the beta-tubulin subunit facing the microtubule plus end conferring a structural polarity. Microtubules usually have 13 protofilaments but different protofilament numbers can be found in some organisms and specialized cells. It depends on Mg(2+) as a cofactor.

Its subcellular location is the cytoplasm. The protein resides in the cytoskeleton. Its function is as follows. Tubulin is the major constituent of microtubules, a cylinder consisting of laterally associated linear protofilaments composed of alpha- and beta-tubulin heterodimers. Microtubules grow by the addition of GTP-tubulin dimers to the microtubule end, where a stabilizing cap forms. Below the cap, tubulin dimers are in GDP-bound state, owing to GTPase activity of alpha-tubulin. The chain is Tubulin beta-3 chain (betaTub60D) from Drosophila melanogaster (Fruit fly).